Consider the following 156-residue polypeptide: Ribosomal RNA large subunit methyltransferase H (156 aa).

Residues L73, G104, and 123-128 (LSKLTL) contribute to the S-adenosyl-L-methionine site.

The protein belongs to the RNA methyltransferase RlmH family. In terms of assembly, homodimer.

The protein localises to the cytoplasm. The enzyme catalyses pseudouridine(1915) in 23S rRNA + S-adenosyl-L-methionine = N(3)-methylpseudouridine(1915) in 23S rRNA + S-adenosyl-L-homocysteine + H(+). Functionally, specifically methylates the pseudouridine at position 1915 (m3Psi1915) in 23S rRNA. The polypeptide is Ribosomal RNA large subunit methyltransferase H (Idiomarina loihiensis (strain ATCC BAA-735 / DSM 15497 / L2-TR)).